A 346-amino-acid chain; its full sequence is MVWLANPERYGQMQYRYCGKSGLRLPALSLGLWHNFGHVNALESQRAILRKAFDLGITHFDLANNYGPPPGSAEENFGRLLREDFAAYRDELIISTKAGYDMWPGPYGSGGSRKYLLASLDQSLKRMGLEYVDIFYSHRVDENTPMEETASALAHAVQSGKALYVGISSYSPERTQKMVELLREWKIPLLIHQPSYNLLNRWVDKSGLLDTLQNNGVGCIAFTPLAQGLLTGKYLNGIPQDSRMHREGNKVRGLTPKMLTEANLNSLRLLNEMAQQRGQSMAQMALSWLLKDDRVTSVLIGASRAEQLEENVQALNNLTFSTKELAQIDQHIADGELNLWQASSDK.

NADP(+) contacts are provided by Trp-33, Asp-61, Tyr-66, Ser-168, Gln-193, Thr-223, Leu-225, Gln-227, Lys-233, Ser-303, Gln-307, and Asn-311.

Belongs to the shaker potassium channel beta subunit family. As to quaternary structure, homotetramer. Homooctamer.

It catalyses the reaction a primary alcohol + NADP(+) = an aldehyde + NADPH + H(+). It carries out the reaction hydroxyacetone + NADP(+) = methylglyoxal + NADPH + H(+). Aldo-keto reductase that catalyzes the stereospecific, NADPH-dependent reduction of L-glyceraldehyde 3-phosphate (L-GAP) to L-glycerol 3-phosphate (L-G3P). The physiological role of Gpr is the detoxification of L-GAP, which may be formed via non-enzymatic and/or enzymatic racemization of D-GAP. Also contributes to cellular methylglyoxal detoxification by catalyzing the NADPH-dependent conversion of methylglyoxal to acetol. However, the catalytic efficiency of methylglyoxal reductase activity is more than 2 orders of magnitude lower than the L-GAP reductase activity. In addition, exhibits activity with glyoxal and probably plays a significant role in detoxification of glyoxal in vivo. Shows broad specificity and can use aromatic aldehydes such as 4-nitrobenzaldehyde and benzaldehyde, D,L-glyceraldehyde, phenylglyoxal, isatin and the model substrate 4-nitrobenzaldehyde. This Escherichia coli (strain K12) protein is L-glyceraldehyde 3-phosphate reductase.